The primary structure comprises 308 residues: MRIFENANYPFVQHRKKAYVFSGVLILLSLVSLVTRGLELGIDFKGGMEFIISGAREPGATAIREALTPVLGTEPEVKTYGAEDILIRVAAEGDINEVQRRIVETIRQRFPETQPEVVQTNIVGPRFAEDLKRGAIYSILGALLVIFVYILIRFEWRFSLGAVVALFHDVLITLGLFSLLHGWLPFSLEIDQTIIAAFLTIVGYSLNDTVVVFDRIREYMNIFKTKPFEEVVNLSINTTLSRTIITSGTTLLVVVILFIFGGEVLRGFSFALIVGIVIGTYSSIFVASPVVIELRARAAARRRLATAR.

The next 6 helical transmembrane spans lie at 18 to 38 (AYVF…TRGL), 134 to 154 (GAIY…LIRF), 160 to 180 (LGAV…FSLL), 193 to 213 (TIIA…VVVF), 244 to 264 (IITS…GGEV), and 272 to 292 (LIVG…PVVI).

It belongs to the SecD/SecF family. SecF subfamily. Forms a complex with SecD. Part of the essential Sec protein translocation apparatus which comprises SecA, SecYEG and auxiliary proteins SecDF. Other proteins may also be involved.

It localises to the cell inner membrane. Part of the Sec protein translocase complex. Interacts with the SecYEG preprotein conducting channel. SecDF uses the proton motive force (PMF) to complete protein translocation after the ATP-dependent function of SecA. The protein is Protein translocase subunit SecF of Rhodothermus marinus (strain ATCC 43812 / DSM 4252 / R-10) (Rhodothermus obamensis).